The sequence spans 471 residues: UDP-glycosyltransferase CGT (471 aa).

Histidine 24 acts as the Proton acceptor in catalysis. Histidine 24 contributes to the an anthocyanidin binding site. The active-site Charge relay is aspartate 120. Threonine 143 is a binding site for UDP-alpha-D-glucose. The tract at residues 280-281 (SR) is UDP. UDP-alpha-D-glucose contacts are provided by valine 343, glutamine 345, histidine 360, tryptophan 363, asparagine 364, serine 365, and glutamate 368. Glycine 383 serves as a coordination point for an anthocyanidin. Residues aspartate 384 and glutamine 385 each contribute to the UDP-alpha-D-glucose site.

Belongs to the UDP-glycosyltransferase family.

It carries out the reaction a 3'-hydro-2'-hydroxy-beta-oxodihydrochalcone + UDP-alpha-D-glucose = a 3'-(beta-D-glucopyranosyl)-2'-hydroxy-beta-oxodihydrochalcone + UDP + H(+). Its function is as follows. UDP-glucose-dependent glucosyltransferase catalyzing the c-glucosylation of 2-hydroxyflavanones. Acts preferentially on the dibenzoylmethane tautomers formed in equilibrium with 2-hydroxyflavanones. No activity with naringenin or naringenin chalcone. In Oryza sativa subsp. indica (Rice), this protein is UDP-glycosyltransferase CGT.